The chain runs to 440 residues: MPTYFDQLERVRYEGPKTTNLLAFRHYNPDELVAGKRMEDHLRFAACYWHTFCWNGSDMFGVGAFERPWQQAGDALSLAKRKADVAFEFFHKLNVPYYCFHDVDVSPEGASLKEYLNNFAQMVEVLAQKQQESGVKLLWGTANCFTHPRYGAGAATNPDPEVFSWAATQVVTAMNATHQLGGENYVLWGGREGYETLLNTDLRQEREQLGRFMQMVVEHKHKTGFRGTLLIEPKPQEPTKHQYDYDAATVYGFLKQFGLEKEIKLNIEANHATLAGHSFHHEIASAIALGLFGSVDANRGDPQLGWDTDQFPNSVEENALVMYEILKAGGFTTGGLNFDAKVRRQSTDKYDLFYGHIGAMDTMALSLKVAAKMLEEGELDKRVARRYAGWNGELGQQILKGQMTLAELAQYAEQHNLAPQHQSGHQEQLENLVNYYLFDK.

Active-site residues include H101 and D104. Residues E232, E268, H271, D296, D307, D309, and D339 each contribute to the Mg(2+) site.

This sequence belongs to the xylose isomerase family. As to quaternary structure, homotetramer. It depends on Mg(2+) as a cofactor.

The protein localises to the cytoplasm. It carries out the reaction alpha-D-xylose = alpha-D-xylulofuranose. This Cronobacter sakazakii (strain ATCC BAA-894) (Enterobacter sakazakii) protein is Xylose isomerase.